The chain runs to 210 residues: Inner membrane-spanning protein YciB (210 aa).

The next 6 helical transmembrane spans lie at 19–39, 53–73, 78–98, 115–135, 148–168, and 175–195; these read LVLELGPLMVFFFANSRGDWL, IFIATGLFMAATATALIVSWI, LPMMPLISGIVVFVFGALTLW, LFGAILLGGLLFGKSLLGYVF, KLTIRWGVFFLFLAVLNEIVW, and FWVAFKVWGTMPITILFTLAQ.

The protein belongs to the YciB family.

Its subcellular location is the cell inner membrane. Functionally, plays a role in cell envelope biogenesis, maintenance of cell envelope integrity and membrane homeostasis. The chain is Inner membrane-spanning protein YciB from Sinorhizobium fredii (strain NBRC 101917 / NGR234).